The chain runs to 397 residues: CCA-adding enzyme (397 aa).

2 residues coordinate ATP: Gly26 and Arg29. Gly26 and Arg29 together coordinate CTP. Mg(2+) is bound by residues Asp39 and Asp41. Residues Arg110, Asp153, Arg156, Arg159, and Arg162 each contribute to the ATP site. Residues Arg110, Asp153, Arg156, Arg159, and Arg162 each coordinate CTP.

This sequence belongs to the tRNA nucleotidyltransferase/poly(A) polymerase family. Bacterial CCA-adding enzyme type 3 subfamily. Homodimer. The cofactor is Mg(2+).

It carries out the reaction a tRNA precursor + 2 CTP + ATP = a tRNA with a 3' CCA end + 3 diphosphate. It catalyses the reaction a tRNA with a 3' CCA end + 2 CTP + ATP = a tRNA with a 3' CCACCA end + 3 diphosphate. Functionally, catalyzes the addition and repair of the essential 3'-terminal CCA sequence in tRNAs without using a nucleic acid template. Adds these three nucleotides in the order of C, C, and A to the tRNA nucleotide-73, using CTP and ATP as substrates and producing inorganic pyrophosphate. tRNA 3'-terminal CCA addition is required both for tRNA processing and repair. Also involved in tRNA surveillance by mediating tandem CCA addition to generate a CCACCA at the 3' terminus of unstable tRNAs. While stable tRNAs receive only 3'-terminal CCA, unstable tRNAs are marked with CCACCA and rapidly degraded. This Bacillus mycoides (strain KBAB4) (Bacillus weihenstephanensis) protein is CCA-adding enzyme.